A 657-amino-acid chain; its full sequence is tRNA 5-methylaminomethyl-2-thiouridine biosynthesis bifunctional protein MnmC (657 aa).

The tRNA (mnm(5)s(2)U34)-methyltransferase stretch occupies residues 1-239; the sequence is MTDRIVPATL…KRAMLVGEFA (239 aa). The interval 263-657 is FAD-dependent cmnm(5)s(2)U34 oxidoreductase; that stretch reads IGAGLAGCAV…VRALRHGRVA (395 aa).

The protein in the N-terminal section; belongs to the methyltransferase superfamily. tRNA (mnm(5)s(2)U34)-methyltransferase family. In the C-terminal section; belongs to the DAO family. Requires FAD as cofactor.

It is found in the cytoplasm. The enzyme catalyses 5-aminomethyl-2-thiouridine(34) in tRNA + S-adenosyl-L-methionine = 5-methylaminomethyl-2-thiouridine(34) in tRNA + S-adenosyl-L-homocysteine + H(+). Functionally, catalyzes the last two steps in the biosynthesis of 5-methylaminomethyl-2-thiouridine (mnm(5)s(2)U) at the wobble position (U34) in tRNA. Catalyzes the FAD-dependent demodification of cmnm(5)s(2)U34 to nm(5)s(2)U34, followed by the transfer of a methyl group from S-adenosyl-L-methionine to nm(5)s(2)U34, to form mnm(5)s(2)U34. The chain is tRNA 5-methylaminomethyl-2-thiouridine biosynthesis bifunctional protein MnmC from Burkholderia pseudomallei (strain 668).